We begin with the raw amino-acid sequence, 784 residues long: Ubiquitin carboxyl-terminal hydrolase 1 (784 aa).

Disordered stretches follow at residues 1-21 and 33-54; these read MPGVIPSESNGLSRGSPSKKN and TKRALDFTDSQEDEEKASEYRG. A compositionally biased stretch (polar residues) spans 7-16; that stretch reads SESNGLSRGS. S16, S42, and S67 each carry phosphoserine. Residues 81-784 enclose the USP domain; that stretch reads VGLNNLGNTC…TPYLLFYKKL (704 aa). The active-site Nucleophile is C90. 2 stretches are compositionally biased toward basic and acidic residues: residues 232 to 243 and 252 to 264; these read KVEEKSLQKEET and DSTRNLDDLKEQL. Disordered stretches follow at residues 232-341 and 363-411; these read KVEE…KINW and TNQR…SSEA. Residues 389-407 are compositionally biased toward polar residues; sequence NTVNGSGPASPGSSVTPVD. S475 bears the Phosphoserine mark. H593 (proton acceptor) is an active-site residue. Residues 686 to 723 are disordered; sequence PEKVVGTPFTDSRNSETNDTNGTQESDRSKESSDQTGI. Residues 694-709 are compositionally biased toward polar residues; the sequence is FTDSRNSETNDTNGTQ. S767 is subject to Phosphoserine.

The protein belongs to the peptidase C19 family. As to quaternary structure, interacts with FANCD2 and PCNA. Interacts with WDR48. Interacts with ATAD5; the interaction regulates USP1-mediated PCNA deubiquitination. Autocatalytic cleavage of USP1 following UV irradiation inactivates it, leading to an increase in ubiquitinated PCNA, recruitment of POLH and translesion synthesis. Post-translationally, ubiquitinated by the CRL2(KLHDC2) complex following autocatalytic cleavage, leading to its degradation: the CRL2(KLHDC2) complex recognizes the diglycine (Gly-Gly) at the C-terminus.

Its subcellular location is the nucleus. It catalyses the reaction Thiol-dependent hydrolysis of ester, thioester, amide, peptide and isopeptide bonds formed by the C-terminal Gly of ubiquitin (a 76-residue protein attached to proteins as an intracellular targeting signal).. In terms of biological role, negative regulator of DNA damage repair which specifically deubiquitinates monoubiquitinated FANCD2. Also involved in PCNA-mediated translesion synthesis (TLS) by deubiquitinating monoubiquitinated PCNA. Has almost no deubiquitinating activity by itself and requires the interaction with WDR48 to have a high activity. The sequence is that of Ubiquitin carboxyl-terminal hydrolase 1 from Rattus norvegicus (Rat).